An 87-amino-acid polypeptide reads, in one-letter code: Small ribosomal subunit protein bS20 (87 aa).

Residues 1 to 21 (MANIKQQIKRNKTNEKRRLKN) are disordered. Over residues 7-20 (QIKRNKTNEKRRLK) the composition is skewed to basic residues.

The protein belongs to the bacterial ribosomal protein bS20 family.

In terms of biological role, binds directly to 16S ribosomal RNA. The chain is Small ribosomal subunit protein bS20 from Phytoplasma mali (strain AT).